The primary structure comprises 161 residues: ATP synthase subunit b (161 aa).

A helical membrane pass occupies residues 10–29; sequence SVIQLMSFFLLLYILKKFLY.

This sequence belongs to the ATPase B chain family. As to quaternary structure, F-type ATPases have 2 components, F(1) - the catalytic core - and F(0) - the membrane proton channel. F(1) has five subunits: alpha(3), beta(3), gamma(1), delta(1), epsilon(1). F(0) has three main subunits: a(1), b(2) and c(10-14). The alpha and beta chains form an alternating ring which encloses part of the gamma chain. F(1) is attached to F(0) by a central stalk formed by the gamma and epsilon chains, while a peripheral stalk is formed by the delta and b chains.

Its subcellular location is the cell inner membrane. Functionally, f(1)F(0) ATP synthase produces ATP from ADP in the presence of a proton or sodium gradient. F-type ATPases consist of two structural domains, F(1) containing the extramembraneous catalytic core and F(0) containing the membrane proton channel, linked together by a central stalk and a peripheral stalk. During catalysis, ATP synthesis in the catalytic domain of F(1) is coupled via a rotary mechanism of the central stalk subunits to proton translocation. Component of the F(0) channel, it forms part of the peripheral stalk, linking F(1) to F(0). The polypeptide is ATP synthase subunit b (Thermosipho melanesiensis (strain DSM 12029 / CIP 104789 / BI429)).